Consider the following 342-residue polypeptide: Methionine import ATP-binding protein MetN (342 aa).

Residues 2–241 (ITLEQVTKIY…PQQPITKRFV (240 aa)) form the ABC transporter domain. 38 to 45 (GYSGAGKS) is a binding site for ATP.

The protein belongs to the ABC transporter superfamily. Methionine importer (TC 3.A.1.24) family. As to quaternary structure, the complex is composed of two ATP-binding proteins (MetN), two transmembrane proteins (MetI) and a solute-binding protein (MetQ).

It is found in the cell membrane. The catalysed reaction is L-methionine(out) + ATP + H2O = L-methionine(in) + ADP + phosphate + H(+). It catalyses the reaction D-methionine(out) + ATP + H2O = D-methionine(in) + ADP + phosphate + H(+). Its function is as follows. Part of the ABC transporter complex MetNIQ involved in methionine import. Responsible for energy coupling to the transport system. The chain is Methionine import ATP-binding protein MetN from Geobacillus kaustophilus (strain HTA426).